Reading from the N-terminus, the 239-residue chain is MGRKWNNIKEKKASKDANTSRIYAKFGREIYVAAKQGEPDPESNQALKVVLERAKTYSVPKNIIERAIEKAKGGAEENFDELRYEGFGPNGSMIIVDALTNNVNRTAPEVRAAFGKNGGNMGVSGSVAYMFDATAVIGVEGKTADEALELLMEADVDVRDILEEDDSVIVYAEPDQFHAVQEAFKNAGVEEFTVAELTMLAQNEVELPEDAKAQFEKLIDVLEDLEDVQQVYHNVDLGE.

It belongs to the TACO1 family. YeeN subfamily.

It localises to the cytoplasm. The chain is Probable transcriptional regulatory protein RBAM_007230 from Bacillus velezensis (strain DSM 23117 / BGSC 10A6 / LMG 26770 / FZB42) (Bacillus amyloliquefaciens subsp. plantarum).